Reading from the N-terminus, the 153-residue chain is uncharacterized protein (153 aa).

The first 25 residues, 1–25 (MKKRQYLKSLYVALLGTLCYLSVNA), serve as a signal peptide directing secretion.

This is an uncharacterized protein from Pasteurella multocida (strain Pm70).